A 197-amino-acid polypeptide reads, in one-letter code: uncharacterized protein (197 aa).

This is an uncharacterized protein from Methanothermobacter thermautotrophicus (Methanobacterium thermoformicicum).